Reading from the N-terminus, the 502-residue chain is Ubiquitin-associated protein 1 (502 aa).

The segment at 1 to 95 (MASKKLGTDV…AEAKVNSKSG (95 aa)) is interaction with ESCRT-I. Residues 17–63 (LDDVPFKIGDKFKTPAKVGLPIGFSLPDCLQVVREMQYDFSLEKKTI) form the UMA domain. Residues 80–100 (ERKAEEAEAKVNSKSGPEGDS) are compositionally biased toward basic and acidic residues. 2 disordered regions span residues 80-117 (ERKA…PPPI) and 135-156 (VSSS…DFNP). Phosphoserine is present on residues S146, S205, and S289. An interaction with PTPN23 region spans residues 260–290 (VSNIKSLSFPKLDSDDSNQKTVKLASTFHST). UBA domains are found at residues 389-430 (SPSE…LFAH) and 451-498 (QCSE…LMAR).

As to quaternary structure, component of an ESCRT-I complex (endosomal sorting complex required for transport I) which consists of TSG101, VPS28, VPS37A and UBAP1 in a 1:1:1:1 stoichiometry. Interacts with PTPN23. Interacts (via UBA domains) with ubiquitinated proteins. Ubiquitous. Highly expressed in heart, liver, brain, kidney, spleen, skeletal muscle, stomach, testis and lung.

Its subcellular location is the cytoplasm. The protein localises to the cytosol. It is found in the endosome. Functionally, component of the ESCRT-I complex, a regulator of vesicular trafficking process. Binds to ubiquitinated cargo proteins and is required for the sorting of endocytic ubiquitinated cargos into multivesicular bodies (MVBs). Plays a role in the proteasomal degradation of ubiquitinated cell-surface proteins, such as EGFR and BST2. The polypeptide is Ubiquitin-associated protein 1 (Mus musculus (Mouse)).